We begin with the raw amino-acid sequence, 196 residues long: Gastrula zinc finger protein XlCGF64.1 (196 aa).

7 C2H2-type zinc fingers span residues 6–28 (YECP…QRGH), 34–56 (FMCT…QFIH), 62–84 (YVCT…QRGH), 90–112 (FTCT…QFIH), 118–140 (YECT…QRGH), 146–168 (FMCT…QFIH), and 174–196 (LMCT…KLSH).

Belongs to the krueppel C2H2-type zinc-finger protein family.

Its subcellular location is the nucleus. In terms of biological role, may be involved in transcriptional regulation. This Xenopus laevis (African clawed frog) protein is Gastrula zinc finger protein XlCGF64.1.